The primary structure comprises 308 residues: UDP-N-acetylenolpyruvoylglucosamine reductase (308 aa).

The FAD-binding PCMH-type domain maps to 22 to 185; it reads RVGGPADWLF…TEATFRAEAG (164 aa). Residue R165 is part of the active site. Basic and acidic residues predominate over residues 197 to 211; the sequence is QIARRDSSQPTKERS. A disordered region spans residues 197-228; sequence QIARRDSSQPTKERSAGSTFRNPAGFSSTGRA. Residues 212–226 show a composition bias toward polar residues; the sequence is AGSTFRNPAGFSSTG. Residue S214 is the Proton donor of the active site. E296 is an active-site residue.

It belongs to the MurB family. Requires FAD as cofactor.

It localises to the cytoplasm. The enzyme catalyses UDP-N-acetyl-alpha-D-muramate + NADP(+) = UDP-N-acetyl-3-O-(1-carboxyvinyl)-alpha-D-glucosamine + NADPH + H(+). The protein operates within cell wall biogenesis; peptidoglycan biosynthesis. Cell wall formation. This is UDP-N-acetylenolpyruvoylglucosamine reductase from Cereibacter sphaeroides (strain ATCC 17029 / ATH 2.4.9) (Rhodobacter sphaeroides).